The following is a 107-amino-acid chain: Phosphoribosyl-ATP pyrophosphatase (107 aa).

The protein belongs to the PRA-PH family.

The protein resides in the cytoplasm. The enzyme catalyses 1-(5-phospho-beta-D-ribosyl)-ATP + H2O = 1-(5-phospho-beta-D-ribosyl)-5'-AMP + diphosphate + H(+). Its pathway is amino-acid biosynthesis; L-histidine biosynthesis; L-histidine from 5-phospho-alpha-D-ribose 1-diphosphate: step 2/9. The protein is Phosphoribosyl-ATP pyrophosphatase of Bacillus thuringiensis (strain Al Hakam).